An 80-amino-acid chain; its full sequence is Cytochrome c oxidase subunit 7B, mitochondrial (80 aa).

Residues 1-24 (MFPLAKNALSRLRVQSIQQAVARQ) constitute a mitochondrion transit peptide. The Mitochondrial matrix portion of the chain corresponds to 25-32 (IHQKRAPD). A helical membrane pass occupies residues 33-59 (FHDKYGNAVLASGATFCVAVWVYMATQ). Residues 60 to 80 (IGIEWNPSPVGRVTPKEWREQ) are Mitochondrial intermembrane-facing.

It belongs to the cytochrome c oxidase VIIb family. As to quaternary structure, component of the cytochrome c oxidase (complex IV, CIV), a multisubunit enzyme composed of 14 subunits. The complex is composed of a catalytic core of 3 subunits MT-CO1, MT-CO2 and MT-CO3, encoded in the mitochondrial DNA, and 11 supernumerary subunits COX4I1 (or COX4I2), COX5A, COX5B, COX6A2 (or COX6A1), COX6B1 (or COX6B2), COX6C, COX7A1 (or COX7A2), COX7B, COX7C, COX8B and NDUFA4, which are encoded in the nuclear genome. The complex exists as a monomer or a dimer and forms supercomplexes (SCs) in the inner mitochondrial membrane with NADH-ubiquinone oxidoreductase (complex I, CI) and ubiquinol-cytochrome c oxidoreductase (cytochrome b-c1 complex, complex III, CIII), resulting in different assemblies (supercomplex SCI(1)III(2)IV(1) and megacomplex MCI(2)III(2)IV(2)).

The protein resides in the mitochondrion inner membrane. It participates in energy metabolism; oxidative phosphorylation. Component of the cytochrome c oxidase, the last enzyme in the mitochondrial electron transport chain which drives oxidative phosphorylation. The respiratory chain contains 3 multisubunit complexes succinate dehydrogenase (complex II, CII), ubiquinol-cytochrome c oxidoreductase (cytochrome b-c1 complex, complex III, CIII) and cytochrome c oxidase (complex IV, CIV), that cooperate to transfer electrons derived from NADH and succinate to molecular oxygen, creating an electrochemical gradient over the inner membrane that drives transmembrane transport and the ATP synthase. Cytochrome c oxidase is the component of the respiratory chain that catalyzes the reduction of oxygen to water. Electrons originating from reduced cytochrome c in the intermembrane space (IMS) are transferred via the dinuclear copper A center (CU(A)) of subunit 2 and heme A of subunit 1 to the active site in subunit 1, a binuclear center (BNC) formed by heme A3 and copper B (CU(B)). The BNC reduces molecular oxygen to 2 water molecules using 4 electrons from cytochrome c in the IMS and 4 protons from the mitochondrial matrix. Plays a role in proper central nervous system (CNS) development in vertebrates. The chain is Cytochrome c oxidase subunit 7B, mitochondrial (COX7B) from Bos taurus (Bovine).